Here is a 150-residue protein sequence, read N- to C-terminus: Single-stranded DNA-binding protein rim1, mitochondrial (150 aa).

A mitochondrion-targeting transit peptide spans 1–22 (MLFLKSSRAFSKRLFSSSTVRY). An SSB domain is found at 25 to 125 (IQRLTLTGNL…HVSADVLFYP (101 aa)). A disordered region spans residues 127 to 150 (NKNGDESGEETHPELDADPMINSF). Positions 128 to 141 (KNGDESGEETHPEL) are enriched in basic and acidic residues.

It is found in the mitochondrion. This protein binds preferentially and cooperatively to ss-DNA. Involved in mitochondrial DNA replication. The protein is Single-stranded DNA-binding protein rim1, mitochondrial (rim1) of Schizosaccharomyces pombe (strain 972 / ATCC 24843) (Fission yeast).